A 145-amino-acid polypeptide reads, in one-letter code: MDINEIREYLPHRYPFLLVDRVTEITLGETIVAYKNVSINEPFFNGHFPHHPIMPGVLIIEAMAQACGILGFKTVNKLPADGYVYYLVGSDNVRFKRPVMPGDQLRLEANVIRGKRGIWKFACRATVDGELACEAEIICAERKVA.

His47 is an active-site residue.

Belongs to the thioester dehydratase family. FabZ subfamily.

The protein localises to the cytoplasm. It catalyses the reaction a (3R)-hydroxyacyl-[ACP] = a (2E)-enoyl-[ACP] + H2O. Involved in unsaturated fatty acids biosynthesis. Catalyzes the dehydration of short chain beta-hydroxyacyl-ACPs and long chain saturated and unsaturated beta-hydroxyacyl-ACPs. This chain is 3-hydroxyacyl-[acyl-carrier-protein] dehydratase FabZ, found in Chromohalobacter salexigens (strain ATCC BAA-138 / DSM 3043 / CIP 106854 / NCIMB 13768 / 1H11).